Here is a 199-residue protein sequence, read N- to C-terminus: Outer-membrane lipoprotein LolB (199 aa).

An N-terminal signal peptide occupies residues 1 to 28; sequence MSVCPAPRSPVRWLHAFTLCLLLAVLAG. Cysteine 29 carries the N-palmitoyl cysteine lipid modification. Residue cysteine 29 is the site of S-diacylglycerol cysteine attachment.

This sequence belongs to the LolB family. In terms of assembly, monomer.

Its subcellular location is the cell outer membrane. Plays a critical role in the incorporation of lipoproteins in the outer membrane after they are released by the LolA protein. This Bordetella parapertussis (strain 12822 / ATCC BAA-587 / NCTC 13253) protein is Outer-membrane lipoprotein LolB.